We begin with the raw amino-acid sequence, 451 residues long: Proline--tRNA ligase (451 aa).

The protein belongs to the class-II aminoacyl-tRNA synthetase family. ProS type 2 subfamily. Homodimer.

Its subcellular location is the cytoplasm. It carries out the reaction tRNA(Pro) + L-proline + ATP = L-prolyl-tRNA(Pro) + AMP + diphosphate. Catalyzes the attachment of proline to tRNA(Pro) in a two-step reaction: proline is first activated by ATP to form Pro-AMP and then transferred to the acceptor end of tRNA(Pro). The sequence is that of Proline--tRNA ligase from Ruegeria sp. (strain TM1040) (Silicibacter sp.).